A 631-amino-acid chain; its full sequence is Chaperone protein HtpG (631 aa).

Residues 1-342 (MSEQTANKET…SNDLPLNVSR (342 aa)) form an a; substrate-binding region. The segment at 343-559 (EILQDNKVTQ…DFEMGTQMAK (217 aa)) is b. The interval 560-631 (LLEAAGQAAP…LSAMNQLLAK (72 aa)) is c.

This sequence belongs to the heat shock protein 90 family. Homodimer.

The protein localises to the cytoplasm. Molecular chaperone. Has ATPase activity. This Aliivibrio fischeri (strain ATCC 700601 / ES114) (Vibrio fischeri) protein is Chaperone protein HtpG.